The following is a 146-amino-acid chain: Snake venom vascular endothelial growth factor toxin (146 aa).

A signal peptide spans 1–24; it reads MAVYLLAVAILFCIQGWPLGTVQG. Glutamine 25 bears the Pyrrolidone carboxylic acid mark. Cystine bridges form between cysteine 38-cysteine 80, cysteine 69-cysteine 115, and cysteine 73-cysteine 117. Residues 118-146 form a disordered region; sequence RPRSASGVNSRKHKRNPEEGEPRAKFPFV. Residues 133–146 are compositionally biased toward basic and acidic residues; the sequence is NPEEGEPRAKFPFV.

The protein belongs to the PDGF/VEGF growth factor family. Snake venom VEGF subfamily. Homodimer; disulfide-linked. Interacts with VEGF receptor-1 (FLT1) with a high affinity, whereas it binds to VEGF receptor-2 (KDR) with a low affinity. Does not bind VEGF receptor-3 (FLT4). In terms of tissue distribution, expressed by the venom gland.

It is found in the secreted. Functionally, snake venom VEGFs that may contribute to venom dispersion and prey subjugation by inducing vascular permeability and hypotension. This protein induces an increase in capillary permeability after intradermal injection, as well as a drastic hypotensive effect after intravenous injection. The hypotension is mediated by nitric oxide (NO), which is produced by VEGF-activated endothelium NO synthase. Also induces angiogenesis in vitro. Like other crotalid VEGFs, this protein interacts with VEGF receptor-1 (FLT1) with a high affinity, whereas it binds to VEGF receptor-2 (KDR) with a low affinity. This Bothrops jararaca (Jararaca) protein is Snake venom vascular endothelial growth factor toxin.